The primary structure comprises 219 residues: MAILYALVARGTVVLSEFTATSTNASTIAKQILEKVPGDNDSNVSYSQDRYVFHVKRTDGLTVLCMAEETAGRRIPFAFLEDIHQRFVRTYGRAVHTALAYAMNEEFSRVLSQQIDYYSNDPNADRINRIKGEMNQVRGVMIENIDKVLDRGERLELLVDKTANMQGNTFRFRKQARRFRSNVWWRNCKLTVLLILLLLVIIYIAVAFLCHGPTLPSCI.

At Ala2 the chain carries N-acetylalanine. The Cytoplasmic segment spans residues 2–189 (AILYALVARG…RSNVWWRNCK (188 aa)). A Longin domain is found at 7 to 111 (LVARGTVVLS…AMNEEFSRVL (105 aa)). The v-SNARE coiled-coil homology domain occupies 126–186 (RINRIKGEMN…RRFRSNVWWR (61 aa)). The chain crosses the membrane as a helical; Anchor for type IV membrane protein span at residues 190–210 (LTVLLILLLLVIIYIAVAFLC). Residues 211-219 (HGPTLPSCI) are Vesicular-facing.

It belongs to the synaptobrevin family. Expressed in flowers, leaves, stems and roots.

The protein localises to the vacuole membrane. Its subcellular location is the prevacuolar compartment membrane. Involved in the targeting and/or fusion of transport vesicles to their target membrane. The polypeptide is Vesicle-associated membrane protein 711 (Arabidopsis thaliana (Mouse-ear cress)).